A 702-amino-acid polypeptide reads, in one-letter code: Polyphosphate kinase (702 aa).

ATP is bound at residue Asn55. Mg(2+) is bound by residues Arg389 and Arg419. His449 functions as the Phosphohistidine intermediate in the catalytic mechanism. Positions 482, 578, and 606 each coordinate ATP.

Belongs to the polyphosphate kinase 1 (PPK1) family. The cofactor is Mg(2+). In terms of processing, an intermediate of this reaction is the autophosphorylated ppk in which a phosphate is covalently linked to a histidine residue through a N-P bond.

The enzyme catalyses [phosphate](n) + ATP = [phosphate](n+1) + ADP. Catalyzes the reversible transfer of the terminal phosphate of ATP to form a long-chain polyphosphate (polyP). This Bacillus anthracis protein is Polyphosphate kinase.